We begin with the raw amino-acid sequence, 465 residues long: Iron-sulfur cluster assembly SufBD family protein SAR0880 (465 aa).

Belongs to the iron-sulfur cluster assembly SufBD family.

The sequence is that of Iron-sulfur cluster assembly SufBD family protein SAR0880 from Staphylococcus aureus (strain MRSA252).